The following is a 108-amino-acid chain: UPF0145 protein LCA_1282 (108 aa).

Belongs to the UPF0145 family.

The polypeptide is UPF0145 protein LCA_1282 (Latilactobacillus sakei subsp. sakei (strain 23K) (Lactobacillus sakei subsp. sakei)).